The following is a 910-amino-acid chain: Leucine--tRNA ligase (910 aa).

Residues 42-52 carry the 'HIGH' region motif; it reads PYPSGKLHMGH. Positions 668–672 match the 'KMSKS' region motif; it reads KMSKS. Lysine 671 serves as a coordination point for ATP.

Belongs to the class-I aminoacyl-tRNA synthetase family.

The protein localises to the cytoplasm. The enzyme catalyses tRNA(Leu) + L-leucine + ATP = L-leucyl-tRNA(Leu) + AMP + diphosphate. This Neisseria meningitidis serogroup A / serotype 4A (strain DSM 15465 / Z2491) protein is Leucine--tRNA ligase.